The sequence spans 509 residues: Coiled-coil domain-containing protein 181 (509 aa).

2 disordered regions span residues 1 to 122 (MDED…EDEE) and 237 to 369 (FLPP…EKKK). Composition is skewed to basic and acidic residues over residues 22 to 33 (DLEWLINDKEKS) and 41 to 56 (ACKK…KENE). The span at 60-69 (ELGQQLSDPD) shows a compositional bias: polar residues. Basic and acidic residues-rich tracts occupy residues 70 to 82 (NSPK…RRND) and 266 to 275 (IKKEESEAKG). A compositionally biased stretch (polar residues) spans 319–333 (RIQSAGVSPVTSTYC). 2 coiled-coil regions span residues 335–377 (SPRQ…VFKA) and 418–488 (LKKK…RSKQ). Basic and acidic residues predominate over residues 337–369 (RQKELQKQLERKREKLKREEEQRKLEEENEKKK).

It belongs to the CCDC181 family. In terms of assembly, homodimer. Interacts with HOOK1. Interacts with HOOK2. Interacts with HOOK3. Predominantly expressed in testis. Expressed at lower level in brain, eye, trachea and lung. Barely expressed in tongue, heart, liver, kidney, spleen and muscle. Present at high level in elongating spermatids, whereas lower levels are observed in round spermatids (at protein level).

It is found in the cytoplasm. The protein resides in the cytoskeleton. It localises to the cell projection. Its subcellular location is the cilium. The protein localises to the flagellum. Functionally, microtubule-binding protein that localizes to the microtubular manchette of elongating spermatids. The chain is Coiled-coil domain-containing protein 181 from Mus musculus (Mouse).